The sequence spans 57 residues: MAKGKKKTSQKWKLYEVKGGKVVRKNKFCPRCGPGVFMANHKDRWSCGRCGYTEWKK.

Zn(2+) is bound by residues Cys29, Cys32, Cys47, and Cys50. A C4-type zinc finger spans residues 29-50 (CPRCGPGVFMANHKDRWSCGRC).

The protein belongs to the eukaryotic ribosomal protein eS31 family. Part of the 30S ribosomal subunit. It depends on Zn(2+) as a cofactor.

The polypeptide is Small ribosomal subunit protein eS31 (Thermococcus kodakarensis (strain ATCC BAA-918 / JCM 12380 / KOD1) (Pyrococcus kodakaraensis (strain KOD1))).